Here is a 194-residue protein sequence, read N- to C-terminus: Holliday junction branch migration complex subunit RuvA (194 aa).

The interval Met-1–Ala-61 is domain I. The segment at Ser-62–Asn-136 is domain II. A flexible linker region spans residues Asn-136–Glu-140. The interval Gln-141–Glu-194 is domain III.

This sequence belongs to the RuvA family. As to quaternary structure, homotetramer. Forms an RuvA(8)-RuvB(12)-Holliday junction (HJ) complex. HJ DNA is sandwiched between 2 RuvA tetramers; dsDNA enters through RuvA and exits via RuvB. An RuvB hexamer assembles on each DNA strand where it exits the tetramer. Each RuvB hexamer is contacted by two RuvA subunits (via domain III) on 2 adjacent RuvB subunits; this complex drives branch migration. In the full resolvosome a probable DNA-RuvA(4)-RuvB(12)-RuvC(2) complex forms which resolves the HJ.

The protein localises to the cytoplasm. Functionally, the RuvA-RuvB-RuvC complex processes Holliday junction (HJ) DNA during genetic recombination and DNA repair, while the RuvA-RuvB complex plays an important role in the rescue of blocked DNA replication forks via replication fork reversal (RFR). RuvA specifically binds to HJ cruciform DNA, conferring on it an open structure. The RuvB hexamer acts as an ATP-dependent pump, pulling dsDNA into and through the RuvAB complex. HJ branch migration allows RuvC to scan DNA until it finds its consensus sequence, where it cleaves and resolves the cruciform DNA. The chain is Holliday junction branch migration complex subunit RuvA from Tropheryma whipplei (strain Twist) (Whipple's bacillus).